Here is a 275-residue protein sequence, read N- to C-terminus: Polyamine aminopropyltransferase (275 aa).

One can recognise a PABS domain in the interval aspartate 2 to lysine 235. Glutamine 31 serves as a coordination point for S-methyl-5'-thioadenosine. Spermidine-binding residues include histidine 62 and aspartate 86. Residues glutamate 106 and aspartate 137 to glycine 138 contribute to the S-methyl-5'-thioadenosine site. The active-site Proton acceptor is the aspartate 155. Aspartate 155–aspartate 158 is a spermidine binding site.

Belongs to the spermidine/spermine synthase family. In terms of assembly, homodimer or homotetramer.

The protein resides in the cytoplasm. The enzyme catalyses S-adenosyl 3-(methylsulfanyl)propylamine + putrescine = S-methyl-5'-thioadenosine + spermidine + H(+). The protein operates within amine and polyamine biosynthesis; spermidine biosynthesis; spermidine from putrescine: step 1/1. Its function is as follows. Catalyzes the irreversible transfer of a propylamine group from the amino donor S-adenosylmethioninamine (decarboxy-AdoMet) to putrescine (1,4-diaminobutane) to yield spermidine. The protein is Polyamine aminopropyltransferase of Clostridium kluyveri (strain NBRC 12016).